The following is a 141-amino-acid chain: Holo-[acyl-carrier-protein] synthase (141 aa).

Positions 7 and 57 each coordinate Mg(2+).

Belongs to the P-Pant transferase superfamily. AcpS family. The cofactor is Mg(2+).

The protein resides in the cytoplasm. It catalyses the reaction apo-[ACP] + CoA = holo-[ACP] + adenosine 3',5'-bisphosphate + H(+). In terms of biological role, transfers the 4'-phosphopantetheine moiety from coenzyme A to a Ser of acyl-carrier-protein. This Corynebacterium efficiens (strain DSM 44549 / YS-314 / AJ 12310 / JCM 11189 / NBRC 100395) protein is Holo-[acyl-carrier-protein] synthase.